The following is a 201-amino-acid chain: 8-oxoguanine DNA glycosylase/AP lyase (201 aa).

Active-site residues include Lys126 and Asp144.

The protein belongs to the type-2 OGG1 family.

It catalyses the reaction 2'-deoxyribonucleotide-(2'-deoxyribose 5'-phosphate)-2'-deoxyribonucleotide-DNA = a 3'-end 2'-deoxyribonucleotide-(2,3-dehydro-2,3-deoxyribose 5'-phosphate)-DNA + a 5'-end 5'-phospho-2'-deoxyribonucleoside-DNA + H(+). Its function is as follows. Catalyzes the excision of an oxidatively damaged form of guanine (7,8-dihydro-8-oxoguanine = 8-oxoG) from DNA. Also cleaves the DNA backbone at apurinic/apyrimidinic sites (AP sites). In Metallosphaera sedula (strain ATCC 51363 / DSM 5348 / JCM 9185 / NBRC 15509 / TH2), this protein is 8-oxoguanine DNA glycosylase/AP lyase.